The primary structure comprises 125 residues: Fluoride-specific ion channel FluC (125 aa).

Transmembrane regions (helical) follow at residues 3–23 (FILI…VSKV), 33–53 (IPLG…FVLF), 65–85 (FVLF…TFAY), and 99–119 (LVYF…GMVL). Na(+)-binding residues include Gly75 and Thr78.

Belongs to the fluoride channel Fluc/FEX (TC 1.A.43) family.

It is found in the cell inner membrane. The catalysed reaction is fluoride(in) = fluoride(out). Its activity is regulated as follows. Na(+) is not transported, but it plays an essential structural role and its presence is essential for fluoride channel function. Fluoride-specific ion channel. Important for reducing fluoride concentration in the cell, thus reducing its toxicity. The polypeptide is Fluoride-specific ion channel FluC (Thermosipho melanesiensis (strain DSM 12029 / CIP 104789 / BI429)).